The following is a 168-amino-acid chain: Large ribosomal subunit protein uL10 (168 aa).

Belongs to the universal ribosomal protein uL10 family. As to quaternary structure, part of the ribosomal stalk of the 50S ribosomal subunit. The N-terminus interacts with L11 and the large rRNA to form the base of the stalk. The C-terminus forms an elongated spine to which L12 dimers bind in a sequential fashion forming a multimeric L10(L12)X complex.

Forms part of the ribosomal stalk, playing a central role in the interaction of the ribosome with GTP-bound translation factors. The chain is Large ribosomal subunit protein uL10 from Ralstonia nicotianae (strain ATCC BAA-1114 / GMI1000) (Ralstonia solanacearum).